Reading from the N-terminus, the 524-residue chain is Cytochrome P450 4F3 (524 aa).

A helical membrane pass occupies residues 19–39 (WLLLLLAGASCLLAYILTPIY). Cys-468 serves as a coordination point for heme.

This sequence belongs to the cytochrome P450 family. It depends on heme as a cofactor. Highest level in polymorphonuclear leukocytes and dendritic cells. Detectable in lymph nodes, spleen, bone marrow and peripheral blood. Highly expressed in ovary. Very low level in liver, kidney, and smooth muscle. Expressed in neutrophils (at protein level).

It localises to the endoplasmic reticulum membrane. The protein resides in the microsome membrane. The catalysed reaction is leukotriene B4 + reduced [NADPH--hemoprotein reductase] + O2 = 18-hydroxy-leukotriene B4 + oxidized [NADPH--hemoprotein reductase] + H2O + H(+). The enzyme catalyses leukotriene B4 + reduced [NADPH--hemoprotein reductase] + O2 = 19-hydroxy-leukotriene B4 + oxidized [NADPH--hemoprotein reductase] + H2O + H(+). The protein operates within lipid metabolism; leukotriene B4 degradation. In terms of biological role, a cytochrome P450 monooxygenase involved in the metabolism of the pro-inflammatory lipid mediator leukotriene B4 (LTB4). Hydroxylates at the omega-1 and omega-2 positions LTB4. This oxidation step leads to LTB4 inactivation, which is postulated to be a crucial part of the resolution of inflammation. Mechanistically, uses molecular oxygen inserting one oxygen atom into a substrate, and reducing the second into a water molecule, with two electrons provided by NADPH via cytochrome P450 reductase (CPR; NADPH-ferrihemoprotein reductase). This Mus musculus (Mouse) protein is Cytochrome P450 4F3.